A 1117-amino-acid chain; its full sequence is Sodium-driven chloride bicarbonate exchanger (1117 aa).

2 disordered regions span residues 1–23 (MEIK…EEAV) and 58–97 (GRKS…TPSQ). Residues 1-508 (MEIKDQGAQM…DFRDAFSLQC (508 aa)) are Cytoplasmic-facing. A compositionally biased stretch (basic residues) spans 59-76 (RKSHRRHRHRGHKHRKRD). Ser-89 is modified (phosphoserine). Position 94 is a phosphothreonine (Thr-94). Ser-275 carries the phosphoserine modification. Disordered regions lie at residues 282–309 (DFSK…KGPP) and 431–476 (WDPS…PELQ). Residues 509-529 (LASFLFLYCACMSPVITFGGL) form a helical membrane-spanning segment. Topologically, residues 530–537 (LGEATEGR) are extracellular. Residues 538–558 (ISAIESLFGASMTGIAYSLFG) traverse the membrane as a helical segment. The Cytoplasmic segment spans residues 559–561 (GQP). A helical transmembrane segment spans residues 562 to 582 (LTILGSTGPVLVFEKILFKFC). Over 583 to 595 (KEYGLSYLSLRAS) the chain is Extracellular. The helical transmembrane segment at 596–616 (IGLWTATLCIILVATDASSLV) threads the bilayer. Over 617–625 (CYITRFTEE) the chain is Cytoplasmic. A helical membrane pass occupies residues 626 to 646 (AFASLICIIFIYEALEKLFEL). Residues 647 to 719 (SESYPINMHN…VGRACGHGHP (73 aa)) are Extracellular-facing. Residues Asn-676, Asn-686, and Asn-696 are each glycosylated (N-linked (GlcNAc...) asparagine). A helical transmembrane segment spans residues 720 to 740 (YVPDVLFWSVILFFSTVTMSA). Over 741-761 (TLKQFKTSRYFPTKVRSIVSD) the chain is Cytoplasmic. The chain crosses the membrane as a helical span at residues 762 to 782 (FAVFLTILCMVLIDYAIGIPS). Residues 783–808 (PKLQVPSVFKPTRDDRGWFVTPLGPN) lie on the Extracellular side of the membrane. Residues 809-829 (PWWTIIAAIIPALLCTILIFM) traverse the membrane as a helical segment. Residues 830–854 (DQQITAVIINRKEHKLKKGCGYHLD) are Cytoplasmic-facing. The helical transmembrane segment at 855–875 (LLMVAVMLGVCSIMGLPWFVA) threads the bilayer. At 876–911 (ATVLSITHVNSLKLESECSAPGEQPKFLGIREQRVT) the chain is on the extracellular side. Residues 912-932 (GLMIFILMGSSVFMTSILKFI) form a helical membrane-spanning segment. Topologically, residues 933–934 (PM) are cytoplasmic. Residues 935–955 (PVLYGVFLYMGASSLKGIQLF) form a helical membrane-spanning segment. Topologically, residues 956 to 997 (DRIKLFWMPAKHQPDFIYLRHVPLRKVHLFTVIQMSCLGLLW) are extracellular. The helical transmembrane segment at 998–1018 (IIKVSRAAIVFPMMVLALVFV) threads the bilayer. Residues 1019-1117 (RKLMDFLFTK…SRFPSKSSPS (99 aa)) are Cytoplasmic-facing. 2 positions are modified to phosphoserine: Ser-1056 and Ser-1084.

Belongs to the anion exchanger (TC 2.A.31) family. N-glycosylated. In the brain, detected in cerebral cortex, subcortex, cerebellum, hippocampus and medulla (at protein level). Expressed in neurons but not in astrocytes (at protein level). Isoforms starting with Met-Glu-Ile-Lys are found predominantly in the brain with lower levels in the eye while isoforms starting with Met-Cys-Asp-Leu are most abundant in the kidney with lower levels in the duodenum, jejunum and ileum (at protein level). In the kidney, isoforms starting with Met-Cys-Asp-Leu are primarily expressed in the cortex, the outer stripe of the outer medulla and the inner stripe of the outer medulla (ISOM) but are not detectable in the inner medulla (IM) while isoforms starting with Met-Glu-Ile-Lys are predominantly expressed in the ISOM and IM. Expressed in the brain, in the hippocampus as well as in dentate gyrus, cortical layers, cerebellum, olfactory bulb and in the epithelial cells of the choroid plexus. Detected in pituitary, testis, kidney and ileum. Detected also in spleen and lung. In terms of tissue distribution, mainly expressed in the jejenum (at protein level).

Its subcellular location is the basolateral cell membrane. The protein resides in the apical cell membrane. It is found in the cell projection. The protein localises to the dendrite. It localises to the axon. Its subcellular location is the perikaryon. The protein resides in the presynapse. It is found in the postsynapse. The catalysed reaction is 2 hydrogencarbonate(out) + chloride(in) + Na(+)(out) = 2 hydrogencarbonate(in) + chloride(out) + Na(+)(in). Sodium/bicarbonate cotransporter which plays an important role in regulating intracellular pH. Has been shown to act as a sodium/bicarbonate cotransporter in exchange for intracellular chloride. Has also been shown to act as a sodium/biocarbonate cotransporter which does not couple net influx of bicarbonate to net efflux of chloride, with the observed chloride efflux being due to chloride self-exchange. Controls neuronal pH and may contribute to the secretion of cerebrospinal fluid. Acting on presynaptic intracellular pH, it promotes GABA release, reduces the excitability of CA1 pyramidal neurons, and modulates short-term synaptic plasticity. Required in retinal cells to maintain normal pH which is necessary for normal vision. In the kidney, likely to mediate bicarbonate reclamation in the apical membrane of the proximal tubules. In terms of biological role, sodium/bicarbonate cotransporter which mediates cotransport of sodium and bicarbonate in association with an efflux of intracellular chloride and is involved in NaCl absorption in the small intestine. In Rattus norvegicus (Rat), this protein is Sodium-driven chloride bicarbonate exchanger.